The chain runs to 346 residues: Endo-1,4-beta-xylanase B (346 aa).

The N-terminal stretch at Met1–Gly19 is a signal peptide. A GH10 domain is found at Gly41 to Leu338. Glu153 functions as the Proton donor in the catalytic mechanism. Glu259 (nucleophile) is an active-site residue.

The protein belongs to the glycosyl hydrolase 10 (cellulase F) family.

It carries out the reaction Endohydrolysis of (1-&gt;4)-beta-D-xylosidic linkages in xylans.. This Thermotoga neapolitana protein is Endo-1,4-beta-xylanase B (xynB).